Here is a 333-residue protein sequence, read N- to C-terminus: Protoheme IX farnesyltransferase (333 aa).

The next 7 helical transmembrane spans lie at 63-83 (LACT…LNCI), 109-129 (AAFI…VSGV), 132-152 (LAAG…TAIL), 160-180 (IVIG…AASG), 188-208 (WLFA…ALLL), 245-265 (GFGV…LIPF), and 292-312 (WSIF…LPMA).

This sequence belongs to the UbiA prenyltransferase family. Protoheme IX farnesyltransferase subfamily.

It is found in the cell inner membrane. The catalysed reaction is heme b + (2E,6E)-farnesyl diphosphate + H2O = Fe(II)-heme o + diphosphate. It participates in porphyrin-containing compound metabolism; heme O biosynthesis; heme O from protoheme: step 1/1. In terms of biological role, converts heme B (protoheme IX) to heme O by substitution of the vinyl group on carbon 2 of heme B porphyrin ring with a hydroxyethyl farnesyl side group. In Prochlorococcus marinus (strain MIT 9303), this protein is Protoheme IX farnesyltransferase.